A 101-amino-acid chain; its full sequence is Small ribosomal subunit protein uS14 (101 aa).

This sequence belongs to the universal ribosomal protein uS14 family. Part of the 30S ribosomal subunit. Contacts proteins S3 and S10.

Functionally, binds 16S rRNA, required for the assembly of 30S particles and may also be responsible for determining the conformation of the 16S rRNA at the A site. The chain is Small ribosomal subunit protein uS14 from Vesicomyosocius okutanii subsp. Calyptogena okutanii (strain HA).